The primary structure comprises 189 residues: MAQLYYKYGTMNSGKTIEILKVAHNYEEQGKPVVIMTSALDTRDGFGIVSSRIGMRREAIPISNDMDIFTFIAQLEEKPYCVLIDESQFLSKQNVYDLARVVDELNVPVMAFGLKNDFQNNLFEGSKHLLLLADKIDEIKTICQYCSKKATMVLRIENGKPVYEGDQIQIGGNETYIPVCRKHYFNPEI.

Residues 9 to 16 (GTMNSGKT) and 85 to 88 (DESQ) contribute to the ATP site. The Proton acceptor role is filled by Glu-86. Zn(2+) is bound by residues Cys-143, Cys-146, Cys-180, and His-183.

This sequence belongs to the thymidine kinase family. In terms of assembly, homotetramer.

It localises to the cytoplasm. The catalysed reaction is thymidine + ATP = dTMP + ADP + H(+). The sequence is that of Thymidine kinase from Streptococcus pyogenes serotype M3 (strain ATCC BAA-595 / MGAS315).